The chain runs to 220 residues: Adenylate kinase (220 aa).

10–15 lines the ATP pocket; that stretch reads GAGKGT. The tract at residues 30–59 is NMP; that stretch reads STGDMLRAAVKNCTPLGLKAKEIMDAGGLV. AMP is bound by residues T31, R36, 57 to 59, 85 to 88, and Q92; these read GLV and GFPR. Residues 126 to 163 form an LID region; the sequence is GRRTCPSCGKGFHVLFAPPRKAGVCDFCGADLVQRGDD. R127 contributes to the ATP binding site. Residues C130, C133, C150, and C153 each contribute to the Zn(2+) site. R160 and R171 together coordinate AMP. ATP is bound at residue L199.

This sequence belongs to the adenylate kinase family. In terms of assembly, monomer.

The protein resides in the cytoplasm. It catalyses the reaction AMP + ATP = 2 ADP. The protein operates within purine metabolism; AMP biosynthesis via salvage pathway; AMP from ADP: step 1/1. Its function is as follows. Catalyzes the reversible transfer of the terminal phosphate group between ATP and AMP. Plays an important role in cellular energy homeostasis and in adenine nucleotide metabolism. This chain is Adenylate kinase, found in Pelobacter propionicus (strain DSM 2379 / NBRC 103807 / OttBd1).